Here is a 103-residue protein sequence, read N- to C-terminus: Putative glutaredoxin-C12 (103 aa).

A Glutaredoxin domain is found at 1 to 102 (MERVRDLASE…QMLKASNAIW (102 aa)). A disulfide bridge links Cys21 with Cys24.

This sequence belongs to the glutaredoxin family. CC-type subfamily.

It localises to the cytoplasm. Functionally, has a glutathione-disulfide oxidoreductase activity in the presence of NADPH and glutathione reductase. Reduces low molecular weight disulfides and proteins. This is Putative glutaredoxin-C12 (GRXC12) from Arabidopsis thaliana (Mouse-ear cress).